A 503-amino-acid chain; its full sequence is Cardiolipin synthase (503 aa).

The next 3 helical transmembrane spans lie at 5–25 (LNVLAFFALLFAALYISRGFL), 30–50 (VGTLSVVFTLSVIFIGIIIFF), and 59–79 (LTWLLVLAAFPVVGFFFYLMF). PLD phosphodiesterase domains lie at 238-265 (INYRNHRKIIVIDGVVGFVGGLNIGDEY) and 416-443 (NRGFMHSKIIIVDHEIASIGTSNMDMRS). Active-site residues include histidine 243, lysine 245, aspartate 250, histidine 421, lysine 423, and aspartate 428.

Belongs to the phospholipase D family. Cardiolipin synthase subfamily.

The protein resides in the cell membrane. The enzyme catalyses 2 a 1,2-diacyl-sn-glycero-3-phospho-(1'-sn-glycerol) = a cardiolipin + glycerol. Its function is as follows. Catalyzes the reversible phosphatidyl group transfer from one phosphatidylglycerol molecule to another to form cardiolipin (CL) (diphosphatidylglycerol) and glycerol. This is Cardiolipin synthase (cls) from Alkalihalophilus pseudofirmus (strain ATCC BAA-2126 / JCM 17055 / OF4) (Bacillus pseudofirmus).